Consider the following 1846-residue polypeptide: C2 domain-containing protein (1846 aa).

The tract at residues 16–36 is disordered; the sequence is NTEKEEGKNAEINENNDPNTQ. The span at 17-26 shows a compositional bias: basic and acidic residues; that stretch reads TEKEEGKNAE. A compositionally biased stretch (polar residues) spans 27–36; the sequence is INENNDPNTQ. In terms of domain architecture, C2 spans 497-623; that stretch reads VPRYRQRGDI…FNEKNVRRNK (127 aa). 2 stretches are compositionally biased toward basic and acidic residues: residues 1193–1211 and 1230–1243; these read DEHT…DNYK and KDDH…KVSK. Disordered regions lie at residues 1193–1244, 1346–1370, 1456–1635, 1652–1692, and 1827–1846; these read DEHT…VSKS, KYTI…KKQD, KNER…KKRV, NEKM…NNER, and EEPS…VRKN. Residues 1349 to 1506 adopt a coiled-coil conformation; sequence INEKRDDIKT…DENMKEEQKM (158 aa). 4 stretches are compositionally biased toward basic and acidic residues: residues 1456–1474, 1481–1629, 1652–1663, and 1670–1692; these read KNER…QKDK, ESRD…MRRE, NEKMKKKEEKEE, and KEDI…NNER. The segment covering 1834-1846 has biased composition (basic residues); it reads SPQKKKIVIVRKN.

It is found in the membrane. Its function is as follows. Binds calcium and phospholipids. Regulates microneme secretion. The sequence is that of C2 domain-containing protein from Plasmodium falciparum (isolate 3D7).